We begin with the raw amino-acid sequence, 88 residues long: Cold-regulated protein BLT14 (88 aa).

This Hordeum vulgare (Barley) protein is Cold-regulated protein BLT14 (BLT14).